The sequence spans 183 residues: Ribosome rescue factor SmrB (183 aa).

One can recognise a Smr domain in the interval 98–173; sequence LDLHGLTQLQ…GDAALLVLIE (76 aa).

It belongs to the SmrB family. Associates with collided ribosomes, but not with correctly translating polysomes.

Acts as a ribosome collision sensor. Detects stalled/collided disomes (pairs of ribosomes where the leading ribosome is stalled and a second ribosome has collided with it) and endonucleolytically cleaves mRNA at the 5' boundary of the stalled ribosome. Stalled/collided disomes form a new interface (primarily via the 30S subunits) that binds SmrB. Cleaved mRNA becomes available for tmRNA ligation, leading to ribosomal subunit dissociation and rescue of stalled ribosomes. The chain is Ribosome rescue factor SmrB from Escherichia coli (strain 55989 / EAEC).